The primary structure comprises 406 residues: DNA repair protein RAD55 (406 aa).

43-50 (GPPGIGKT) is an ATP binding site. The segment at 385–406 (DSNDNPLPNAEGKEEIIYDSEG) is disordered.

Belongs to the RecA family. RAD55 subfamily.

It is found in the nucleus. Its function is as follows. Required for radiation resistance and meiotic viability and presumably acts in recombination and recombinational DNA repair pathways. The chain is DNA repair protein RAD55 (RAD55) from Saccharomyces cerevisiae (strain ATCC 204508 / S288c) (Baker's yeast).